Consider the following 123-residue polypeptide: Large ribosomal subunit protein uL14 (123 aa).

It belongs to the universal ribosomal protein uL14 family. Part of the 50S ribosomal subunit. Forms a cluster with proteins L3 and L19. In the 70S ribosome, L14 and L19 interact and together make contacts with the 16S rRNA in bridges B5 and B8.

Its function is as follows. Binds to 23S rRNA. Forms part of two intersubunit bridges in the 70S ribosome. This Vibrio vulnificus (strain CMCP6) protein is Large ribosomal subunit protein uL14.